The chain runs to 676 residues: Zinc finger protein 418 (676 aa).

The 87-residue stretch at 5–91 (VAFEDVAVNF…HSCEMCGAIL (87 aa)) folds into the KRAB domain. C2H2-type zinc fingers lie at residues 82 to 105 (HSCE…GTHH), 230 to 252 (CYCW…QRVH), 258 to 280 (YECG…QRVH), 286 to 308 (YECG…QRVH), 314 to 336 (YECG…QRVH), 342 to 364 (YECE…QRGH), 370 to 392 (YECE…HRVH), 398 to 420 (YECG…QRGH), 426 to 448 (YECG…QRSH), 454 to 476 (YECR…QRVH), 482 to 504 (YECN…QRVH), 510 to 532 (FECS…RRVH), 538 to 560 (YECG…QKTH), 591 to 613 (YECR…QRLH), 619 to 641 (YECS…RRVH), and 647 to 669 (YECS…QRVH).

It belongs to the krueppel C2H2-type zinc-finger protein family. Highly expressed in heart.

It is found in the nucleus. Its function is as follows. Transcriptional repressor. May play a role as regulator of the ubiquitin-proteasome system and autophagy-lysosomal pathway. The sequence is that of Zinc finger protein 418 (ZNF418) from Homo sapiens (Human).